The chain runs to 538 residues: Chaperonin GroEL 1 (538 aa).

Residues 29-32 (TLGP), 86-90 (DGTTT), glycine 413, and aspartate 494 each bind ATP.

Belongs to the chaperonin (HSP60) family. Forms a cylinder of 14 subunits composed of two heptameric rings stacked back-to-back. Interacts with the co-chaperonin GroES.

It localises to the cytoplasm. The enzyme catalyses ATP + H2O + a folded polypeptide = ADP + phosphate + an unfolded polypeptide.. Functionally, together with its co-chaperonin GroES, plays an essential role in assisting protein folding. The GroEL-GroES system forms a nano-cage that allows encapsulation of the non-native substrate proteins and provides a physical environment optimized to promote and accelerate protein folding. This Mycobacterium avium (strain 104) protein is Chaperonin GroEL 1.